The chain runs to 353 residues: Suppressor of RNA-mediated gene silencing (353 aa).

This sequence belongs to the phytoreovirus non-structural protein 10 family.

Functionally, suppressor of RNA-mediated gene silencing, also known as post-transcriptional gene silencing (PTGS), a mechanism of plant viral defense that limits the accumulation of viral RNAs. The chain is Suppressor of RNA-mediated gene silencing from Alopecurus aequalis (Barnyard grass).